Consider the following 215-residue polypeptide: Cytochrome b6 (215 aa).

The chain crosses the membrane as a helical span at residues 32 to 52 (VFYCFGGMTLTCFLVQLATGF). Position 35 (Cys-35) interacts with heme c. Heme b is bound by residues His-86 and His-100. 3 helical membrane passes run 90 to 110 (ASMMVLMMILHIFRVYLTGGF), 116 to 136 (LTWITGVILAVLTVSFGVTGY), and 186 to 206 (LHTLFLPALSVIFLLAHFLMI). The heme b site is built by His-187 and His-202.

It belongs to the cytochrome b family. PetB subfamily. As to quaternary structure, the 4 large subunits of the cytochrome b6-f complex are cytochrome b6, subunit IV (17 kDa polypeptide, PetD), cytochrome f and the Rieske protein, while the 4 small subunits are PetG, PetL, PetM and PetN. The complex functions as a dimer. Heme b is required as a cofactor. It depends on heme c as a cofactor.

The protein resides in the plastid. It localises to the chloroplast thylakoid membrane. In terms of biological role, component of the cytochrome b6-f complex, which mediates electron transfer between photosystem II (PSII) and photosystem I (PSI), cyclic electron flow around PSI, and state transitions. The chain is Cytochrome b6 from Cyanidium caldarium (Red alga).